Consider the following 171-residue polypeptide: ATP synthase subunit b (171 aa).

A helical membrane pass occupies residues 31–51 (FFVVLAIFLVVLAVIGTFVVP).

Belongs to the ATPase B chain family. F-type ATPases have 2 components, F(1) - the catalytic core - and F(0) - the membrane proton channel. F(1) has five subunits: alpha(3), beta(3), gamma(1), delta(1), epsilon(1). F(0) has three main subunits: a(1), b(2) and c(10-14). The alpha and beta chains form an alternating ring which encloses part of the gamma chain. F(1) is attached to F(0) by a central stalk formed by the gamma and epsilon chains, while a peripheral stalk is formed by the delta and b chains.

The protein resides in the cell membrane. F(1)F(0) ATP synthase produces ATP from ADP in the presence of a proton or sodium gradient. F-type ATPases consist of two structural domains, F(1) containing the extramembraneous catalytic core and F(0) containing the membrane proton channel, linked together by a central stalk and a peripheral stalk. During catalysis, ATP synthesis in the catalytic domain of F(1) is coupled via a rotary mechanism of the central stalk subunits to proton translocation. In terms of biological role, component of the F(0) channel, it forms part of the peripheral stalk, linking F(1) to F(0). This Mycobacterium bovis (strain ATCC BAA-935 / AF2122/97) protein is ATP synthase subunit b.